Reading from the N-terminus, the 168-residue chain is DOMON domain-containing protein Y73F4A.2 (168 aa).

A signal peptide spans 1–18; sequence MFRSIAVLSALLFAFASA. The DOMON domain maps to 26-143; sequence SDFEVYWRFA…CQKWRFVKSG (118 aa). Residue Asn-36 is glycosylated (N-linked (GlcNAc...) asparagine). A disordered region spans residues 148 to 168; the sequence is GQLTRNDKSPKEKKVCPMECN. A compositionally biased stretch (basic and acidic residues) spans 152-168; sequence RNDKSPKEKKVCPMECN.

The protein resides in the secreted. This is DOMON domain-containing protein Y73F4A.2 from Caenorhabditis elegans.